The following is a 225-amino-acid chain: Phosphatidylserine decarboxylase proenzyme (225 aa).

The active-site Schiff-base intermediate with substrate; via pyruvic acid is the S195. The residue at position 195 (S195) is a Pyruvic acid (Ser); by autocatalysis.

The protein belongs to the phosphatidylserine decarboxylase family. PSD-A subfamily. As to quaternary structure, heterodimer of a large membrane-associated beta subunit and a small pyruvoyl-containing alpha subunit. It depends on pyruvate as a cofactor. Is synthesized initially as an inactive proenzyme. Formation of the active enzyme involves a self-maturation process in which the active site pyruvoyl group is generated from an internal serine residue via an autocatalytic post-translational modification. Two non-identical subunits are generated from the proenzyme in this reaction, and the pyruvate is formed at the N-terminus of the alpha chain, which is derived from the carboxyl end of the proenzyme. The post-translation cleavage follows an unusual pathway, termed non-hydrolytic serinolysis, in which the side chain hydroxyl group of the serine supplies its oxygen atom to form the C-terminus of the beta chain, while the remainder of the serine residue undergoes an oxidative deamination to produce ammonia and the pyruvoyl prosthetic group on the alpha chain.

The protein localises to the cell membrane. It catalyses the reaction a 1,2-diacyl-sn-glycero-3-phospho-L-serine + H(+) = a 1,2-diacyl-sn-glycero-3-phosphoethanolamine + CO2. It participates in phospholipid metabolism; phosphatidylethanolamine biosynthesis; phosphatidylethanolamine from CDP-diacylglycerol: step 2/2. Catalyzes the formation of phosphatidylethanolamine (PtdEtn) from phosphatidylserine (PtdSer). The sequence is that of Phosphatidylserine decarboxylase proenzyme from Gluconacetobacter diazotrophicus (strain ATCC 49037 / DSM 5601 / CCUG 37298 / CIP 103539 / LMG 7603 / PAl5).